Consider the following 564-residue polypeptide: Sulfite reductase [NADPH] hemoprotein beta-component 1 (564 aa).

[4Fe-4S] cluster-binding residues include cysteine 426, cysteine 432, cysteine 471, and cysteine 475. Cysteine 475 provides a ligand contact to siroheme.

Belongs to the nitrite and sulfite reductase 4Fe-4S domain family. Alpha(8)-beta(8). The alpha component is a flavoprotein, the beta component is a hemoprotein. Siroheme serves as cofactor. The cofactor is [4Fe-4S] cluster.

The catalysed reaction is hydrogen sulfide + 3 NADP(+) + 3 H2O = sulfite + 3 NADPH + 4 H(+). It participates in sulfur metabolism; hydrogen sulfide biosynthesis; hydrogen sulfide from sulfite (NADPH route): step 1/1. Component of the sulfite reductase complex that catalyzes the 6-electron reduction of sulfite to sulfide. This is one of several activities required for the biosynthesis of L-cysteine from sulfate. The protein is Sulfite reductase [NADPH] hemoprotein beta-component 1 of Pectobacterium carotovorum subsp. carotovorum (strain PC1).